Reading from the N-terminus, the 170-residue chain is Protein ECM34 (170 aa).

A glycan (N-linked (GlcNAc...) asparagine) is linked at Asn45. 2 consecutive transmembrane segments (helical) span residues 51–71 (IWLL…GIGG) and 98–118 (TIVI…FKMY).

Belongs to the DUP/COS family.

Its subcellular location is the membrane. Its function is as follows. May be involved in cell wall organization and biogenesis. The protein is Protein ECM34 (ECM34) of Saccharomyces cerevisiae (strain ATCC 204508 / S288c) (Baker's yeast).